Consider the following 423-residue polypeptide: Serine hydroxymethyltransferase (423 aa).

Position 121 to 123 (121 to 123 (GHI)) interacts with (6S)-5,6,7,8-tetrahydrofolate. Lys-227 is subject to N6-(pyridoxal phosphate)lysine. Glu-242 is a binding site for (6S)-5,6,7,8-tetrahydrofolate.

The protein belongs to the SHMT family. In terms of assembly, homodimer. It depends on pyridoxal 5'-phosphate as a cofactor.

The protein localises to the cytoplasm. It carries out the reaction 5,10-methylenetetrahydromethanopterin + glycine + H2O = 5,6,7,8-tetrahydromethanopterin + L-serine. The protein operates within amino-acid biosynthesis; glycine biosynthesis; glycine from L-serine: step 1/1. Its function is as follows. Catalyzes the reversible interconversion of serine and glycine with tetrahydromethanopterin (H4MPT) serving as the one-carbon carrier. Cannot use tetrahydrofolate (THF or H4PteGlu) instead of H4MPT as the pteridine substrate. Also probably exhibits a pteridine-independent aldolase activity toward beta-hydroxyamino acids, producing glycine and aldehydes, via a retro-aldol mechanism. This chain is Serine hydroxymethyltransferase, found in Methanothermobacter thermautotrophicus (strain ATCC 29096 / DSM 1053 / JCM 10044 / NBRC 100330 / Delta H) (Methanobacterium thermoautotrophicum).